Here is a 151-residue protein sequence, read N- to C-terminus: D-aminoacyl-tRNA deacylase (151 aa).

A Gly-cisPro motif, important for rejection of L-amino acids motif is present at residues 137-138; that stretch reads GP.

It belongs to the DTD family. Homodimer.

The protein resides in the cytoplasm. It carries out the reaction glycyl-tRNA(Ala) + H2O = tRNA(Ala) + glycine + H(+). It catalyses the reaction a D-aminoacyl-tRNA + H2O = a tRNA + a D-alpha-amino acid + H(+). Functionally, an aminoacyl-tRNA editing enzyme that deacylates mischarged D-aminoacyl-tRNAs. Also deacylates mischarged glycyl-tRNA(Ala), protecting cells against glycine mischarging by AlaRS. Acts via tRNA-based rather than protein-based catalysis; rejects L-amino acids rather than detecting D-amino acids in the active site. By recycling D-aminoacyl-tRNA to D-amino acids and free tRNA molecules, this enzyme counteracts the toxicity associated with the formation of D-aminoacyl-tRNA entities in vivo and helps enforce protein L-homochirality. This chain is D-aminoacyl-tRNA deacylase, found in Listeria monocytogenes serotype 4a (strain HCC23).